The primary structure comprises 435 residues: Enolase (435 aa).

A (2R)-2-phosphoglycerate-binding site is contributed by Gln-163. Glu-205 (proton donor) is an active-site residue. The Mg(2+) site is built by Asp-243, Glu-292, and Asp-319. 4 residues coordinate (2R)-2-phosphoglycerate: Lys-344, Arg-373, Ser-374, and Lys-395. The active-site Proton acceptor is Lys-344.

This sequence belongs to the enolase family. Mg(2+) is required as a cofactor.

The protein localises to the cytoplasm. Its subcellular location is the secreted. It localises to the cell surface. The catalysed reaction is (2R)-2-phosphoglycerate = phosphoenolpyruvate + H2O. Its pathway is carbohydrate degradation; glycolysis; pyruvate from D-glyceraldehyde 3-phosphate: step 4/5. Its function is as follows. Catalyzes the reversible conversion of 2-phosphoglycerate (2-PG) into phosphoenolpyruvate (PEP). It is essential for the degradation of carbohydrates via glycolysis. This is Enolase from Streptococcus suis (strain 98HAH33).